The primary structure comprises 139 residues: Large-conductance mechanosensitive channel (139 aa).

2 helical membrane passes run valine 14–leucine 34 and glycine 81–valine 101.

It belongs to the MscL family. Homopentamer.

The protein localises to the cell membrane. Channel that opens in response to stretch forces in the membrane lipid bilayer. May participate in the regulation of osmotic pressure changes within the cell. The chain is Large-conductance mechanosensitive channel from Chloroflexus aurantiacus (strain ATCC 29366 / DSM 635 / J-10-fl).